The chain runs to 200 residues: Casparian strip membrane protein 1 (200 aa).

The Cytoplasmic segment spans residues 1-38; the sequence is MSTTIEIPAESSAVAKGKAPLIGASSSSYEKKGGYKKG. A helical transmembrane segment spans residues 39–59; it reads IAIFDFILRLGAVISALSAAA. Topologically, residues 60–88 are extracellular; sequence TMGTSDETLPFFTQFFQFEAGYDDFPTFQ. Residues 89–109 traverse the membrane as a helical segment; the sequence is FFVIAMGFVGGYLVLSLPFSV. The Cytoplasmic portion of the chain corresponds to 110 to 121; the sequence is VAIIRPHAVGIR. Residues 122–142 traverse the membrane as a helical segment; sequence LLLLILDTVALTLNTAAAAAA. Residues 143–175 lie on the Extracellular side of the membrane; it reads AAIVYLAHNGNQSANWLAVCQQFGDFCQKVSGG. An N-linked (GlcNAc...) asparagine glycan is attached at asparagine 153. Residues 176 to 196 form a helical membrane-spanning segment; that stretch reads VVASFVSVLVFLLLVVMSAVA. The Cytoplasmic portion of the chain corresponds to 197 to 200; sequence LRKH.

The protein belongs to the Casparian strip membrane proteins (CASP) family. As to quaternary structure, homodimer and heterodimers.

It is found in the cell membrane. Functionally, regulates membrane-cell wall junctions and localized cell wall deposition. Required for establishment of the Casparian strip membrane domain (CSD) and the subsequent formation of Casparian strips, a cell wall modification of the root endodermis that determines an apoplastic barrier between the intraorganismal apoplasm and the extraorganismal apoplasm and prevents lateral diffusion. The chain is Casparian strip membrane protein 1 from Ricinus communis (Castor bean).